A 364-amino-acid polypeptide reads, in one-letter code: Fructose-bisphosphate aldolase C (364 aa).

Tyr5 bears the Phosphotyrosine mark. A phosphoserine mark is found at Ser36, Ser39, and Ser45. Substrate is bound at residue Arg56. Lys111 is modified (N6-acetyllysine). Ser132 carries the post-translational modification Phosphoserine. Lys147 contacts substrate. Glu188 acts as the Proton acceptor in catalysis. The Schiff-base intermediate with dihydroxyacetone-P role is filled by Lys230.

It belongs to the class I fructose-bisphosphate aldolase family. In terms of assembly, homotetramer. Interacts with ATP6V1E1.

It catalyses the reaction beta-D-fructose 1,6-bisphosphate = D-glyceraldehyde 3-phosphate + dihydroxyacetone phosphate. It functions in the pathway carbohydrate degradation; glycolysis; D-glyceraldehyde 3-phosphate and glycerone phosphate from D-glucose: step 4/4. The sequence is that of Fructose-bisphosphate aldolase C (ALDOC) from Macaca fascicularis (Crab-eating macaque).